We begin with the raw amino-acid sequence, 377 residues long: tRNA-specific 2-thiouridylase MnmA (377 aa).

ATP-binding positions include 12–19 (GMSGGVDS) and methionine 38. The interaction with target base in tRNA stretch occupies residues 98-100 (NPD). Cysteine 103 serves as the catalytic Nucleophile. An intrachain disulfide couples cysteine 103 to cysteine 200. Glycine 127 serves as a coordination point for ATP. The segment at 150–152 (KDQ) is interaction with tRNA. Residue cysteine 200 is the Cysteine persulfide intermediate of the active site. The segment at 314-315 (RY) is interaction with tRNA.

It belongs to the MnmA/TRMU family.

Its subcellular location is the cytoplasm. It catalyses the reaction S-sulfanyl-L-cysteinyl-[protein] + uridine(34) in tRNA + AH2 + ATP = 2-thiouridine(34) in tRNA + L-cysteinyl-[protein] + A + AMP + diphosphate + H(+). Its function is as follows. Catalyzes the 2-thiolation of uridine at the wobble position (U34) of tRNA, leading to the formation of s(2)U34. This chain is tRNA-specific 2-thiouridylase MnmA, found in Limosilactobacillus fermentum (strain NBRC 3956 / LMG 18251) (Lactobacillus fermentum).